A 551-amino-acid polypeptide reads, in one-letter code: Protein ROOT HAIR SPECIFIC 17 (551 aa).

The chain crosses the membrane as a helical; Signal-anchor for type II membrane protein span at residues Leu-39–Thr-59. N-linked (GlcNAc...) asparagine glycosylation is found at Asn-109 and Asn-153. His-293 to Arg-295 lines the substrate pocket. N-linked (GlcNAc...) asparagine glycosylation is found at Asn-405 and Asn-465. Residues Lys-515–Ser-539 form a disordered region.

The protein belongs to the glycosyltransferase GT106 family. Specifically expressed in the root hair.

The protein localises to the membrane. Its pathway is glycan metabolism. The protein is Protein ROOT HAIR SPECIFIC 17 of Arabidopsis thaliana (Mouse-ear cress).